The sequence spans 487 residues: L-tartrate/succinate antiporter (487 aa).

The next 14 helical transmembrane spans lie at 10-30, 33-53, 54-74, 93-113, 137-157, 189-209, 236-256, 292-312, 313-333, 340-360, 370-390, 393-413, 418-438, and 465-485; these read YLAP…AGLE, TWLY…EPVP, GAVV…WLLF, WAVS…FMFG, TLFL…VTPS, IGSY…AIFL, FLGM…LAYV, LIVG…AAMV, GYSV…DIVS, VFFW…TGFI, SLSG…FYLL, FFAS…AAAL, IPLP…SILT, and IFGL…MPVV.

This sequence belongs to the SLC13A/DASS transporter (TC 2.A.47) family. DIT1 subfamily.

Its subcellular location is the cell inner membrane. It catalyses the reaction (2R,3R)-tartrate(out) + succinate(in) = (2R,3R)-tartrate(in) + succinate(out). In terms of biological role, catalyzes the uptake of tartrate in exchange for intracellular succinate. Essential for anaerobic L-tartrate fermentation. In Shigella sonnei (strain Ss046), this protein is L-tartrate/succinate antiporter (ttdT).